Reading from the N-terminus, the 77-residue chain is Acyl carrier protein (77 aa).

Positions Ala2 to Gln77 constitute a Carrier domain. The residue at position 37 (Ser37) is an O-(pantetheine 4'-phosphoryl)serine.

This sequence belongs to the acyl carrier protein (ACP) family. Post-translationally, 4'-phosphopantetheine is transferred from CoA to a specific serine of apo-ACP by AcpS. This modification is essential for activity because fatty acids are bound in thioester linkage to the sulfhydryl of the prosthetic group.

The protein localises to the cytoplasm. It functions in the pathway lipid metabolism; fatty acid biosynthesis. Its function is as follows. Carrier of the growing fatty acid chain in fatty acid biosynthesis. This is Acyl carrier protein from Bacillus licheniformis (strain ATCC 14580 / DSM 13 / JCM 2505 / CCUG 7422 / NBRC 12200 / NCIMB 9375 / NCTC 10341 / NRRL NRS-1264 / Gibson 46).